The primary structure comprises 268 residues: Purine nucleoside phosphorylase (268 aa).

Residues Ser-36, His-68, 88 to 90 (RIH), and Ala-120 contribute to the phosphate site. Glu-189 contributes to the a purine D-ribonucleoside binding site. Ser-208 is a binding site for phosphate. Position 231 (Asn-231) interacts with a purine D-ribonucleoside.

The protein belongs to the PNP/MTAP phosphorylase family. Homotrimer.

It catalyses the reaction a purine 2'-deoxy-D-ribonucleoside + phosphate = a purine nucleobase + 2-deoxy-alpha-D-ribose 1-phosphate. It participates in purine metabolism; purine nucleoside salvage. Its function is as follows. The purine nucleoside phosphorylases catalyze the phosphorolytic breakdown of the N-glycosidic bond in the beta-(deoxy)ribonucleoside molecules, with the formation of the corresponding free purine bases and pentose-1-phosphate. Cleaves guanosine, inosine, 2'-deoxyguanosine and 2'-deoxyinosine. The sequence is that of Purine nucleoside phosphorylase (punA) from Mycobacterium leprae (strain TN).